The chain runs to 202 residues: uncharacterized protein (202 aa).

The interval 179 to 202 (FDEQDSTPELPPNYLLDSQKKSQG) is disordered.

This is an uncharacterized protein from Haemophilus influenzae (strain ATCC 51907 / DSM 11121 / KW20 / Rd).